Reading from the N-terminus, the 92-residue chain is Small ribosomal subunit protein uS19 (92 aa).

It belongs to the universal ribosomal protein uS19 family.

Protein S19 forms a complex with S13 that binds strongly to the 16S ribosomal RNA. The polypeptide is Small ribosomal subunit protein uS19 (Rhodospirillum rubrum (strain ATCC 11170 / ATH 1.1.1 / DSM 467 / LMG 4362 / NCIMB 8255 / S1)).